The chain runs to 713 residues: Polyribonucleotide nucleotidyltransferase (713 aa).

Mg(2+) contacts are provided by D485 and D491. Residues 552–611 enclose the KH domain; the sequence is PRIHTIKINPEKIKDVIGKGGSVIRALTEETGTNIELDDDGTVRISAVANEAAMEAIRRI. The S1 motif domain occupies 621-689; sequence NRIYEGKVVR…RQGRVRLSIK (69 aa).

This sequence belongs to the polyribonucleotide nucleotidyltransferase family. Component of the RNA degradosome, which is a multiprotein complex involved in RNA processing and mRNA degradation. Mg(2+) is required as a cofactor.

It is found in the cytoplasm. It catalyses the reaction RNA(n+1) + phosphate = RNA(n) + a ribonucleoside 5'-diphosphate. Its function is as follows. Involved in mRNA degradation. Catalyzes the phosphorolysis of single-stranded polyribonucleotides processively in the 3'- to 5'-direction. This Aeromonas salmonicida (strain A449) protein is Polyribonucleotide nucleotidyltransferase.